Here is a 122-residue protein sequence, read N- to C-terminus: Large ribosomal subunit protein uL14 (122 aa).

Belongs to the universal ribosomal protein uL14 family. In terms of assembly, part of the 50S ribosomal subunit. Forms a cluster with proteins L3 and L19. In the 70S ribosome, L14 and L19 interact and together make contacts with the 16S rRNA in bridges B5 and B8.

Functionally, binds to 23S rRNA. Forms part of two intersubunit bridges in the 70S ribosome. This chain is Large ribosomal subunit protein uL14, found in Streptococcus equi subsp. equi (strain 4047).